The sequence spans 343 residues: Uroporphyrinogen decarboxylase (343 aa).

Residues Arg-23–Arg-27, Asp-73, Tyr-150, Ser-205, and His-322 contribute to the substrate site.

The protein belongs to the uroporphyrinogen decarboxylase family. As to quaternary structure, homodimer.

It is found in the cytoplasm. The catalysed reaction is uroporphyrinogen III + 4 H(+) = coproporphyrinogen III + 4 CO2. The protein operates within porphyrin-containing compound metabolism; protoporphyrin-IX biosynthesis; coproporphyrinogen-III from 5-aminolevulinate: step 4/4. Its function is as follows. Catalyzes the decarboxylation of four acetate groups of uroporphyrinogen-III to yield coproporphyrinogen-III. This chain is Uroporphyrinogen decarboxylase, found in Cereibacter sphaeroides (strain KD131 / KCTC 12085) (Rhodobacter sphaeroides).